Consider the following 516-residue polypeptide: Protein DML1 (516 aa).

Belongs to the misato family.

It localises to the mitochondrion. Involved in the partitioning of the mitochondrial organelle and mitochondrial DNA (mtDNA) inheritance. The polypeptide is Protein DML1 (DML1) (Coccidioides immitis (strain RS) (Valley fever fungus)).